The sequence spans 1265 residues: Stromal processing peptidase, chloroplastic (1265 aa).

The transit peptide at 1–143 (MASSSSSIFT…SLRKHSQIVN (143 aa)) directs the protein to the chloroplast. Histidine 240 provides a ligand contact to Zn(2+). The active-site Proton acceptor is the glutamate 243. Histidine 244 contributes to the Zn(2+) binding site. Glutamate 314 is a catalytic residue. Position 321 (glutamate 321) interacts with Zn(2+).

This sequence belongs to the peptidase M16 family. Requires Zn(2+) as cofactor.

It localises to the plastid. The protein resides in the chloroplast stroma. In terms of biological role, cleaves presequences (transit peptides) from chloroplastic protein precursors. Initially recognizes a precursor by binding to the C-terminus of its transit peptide and then removes the transit peptide in a single endoproteolytic step. In a next step, pursues the cleavage of transit peptide to a subfragment form. The polypeptide is Stromal processing peptidase, chloroplastic (Arabidopsis thaliana (Mouse-ear cress)).